The primary structure comprises 102 residues: Redox- and pH-responsive transcriptional regulator WhiB3 (102 aa).

A 4Fe-4S Wbl-type domain is found at 22–86 (LCRGMDSSMF…GGLSESERDL (65 aa)). [4Fe-4S] cluster is bound by residues C23, C53, C56, and C62.

The protein belongs to the WhiB family. In terms of assembly, homodimer. Interacts with the C-terminal 54 residues of sigma factor SigA (RpoV). [4Fe-4S] cluster is required as a cofactor. In terms of processing, the 4Fe-4S cluster interacts with NO, forming a protein-bound dinitrosyliron dithiol complex. Post-translationally, the 4Fe-4S cluster interacts with O(2), leading to its degradation. Cluster loss takes about 2 hours. Once in the apo-form the cysteines oxidize to form 2 intramolecular disulfide bonds.

It localises to the cytoplasm. Functionally, a redox-sensitive transcriptional regulator. Maintains intracellular redox homeostasis by regulating catabolic metabolism and polyketide biosynthesis. Regulates expression of the redox buffer ergothioneine (ERG) in a carbon-source-dependent manner; loss of ERG or mycothiol (MSH, the other major redox buffer in this bacteria) leads to respiratory alterations and bioenergetic deficiencies that negatively impact virulence. In response to low external pH (like that found in host macrophage phagosomes) alters endogenous gene expression leading to acid resistance; MSH and WhiB3 are probably part of a regulatory circuit that mediates gene expression upon acid stress. Regulates pathogenic lipid synthesis, coordinating proprionate flux (and other host-derived fatty acid oxidation intermediates) into methyl-branched fatty acids (polyacyltrehalose, phthiocerol dimycocerosates, sulfolipids) and the storage lipid triacylglycerol, functioning as reductive sink. During intracellular growth M.tuberculosis uses host fatty acids as an energy source, generating large quantities of proprionate and NADH/NADPH, which are toxic and highly reducing respectively. WhiB3 is thought to help dissipate proprionate and NADH/NADPH by switching to the in vivo carbon source and via lipid anabolism. Responds to NO and O(2). Regulates expression of genes encoding modular polyketide synthases such as pks2, pks3 and fbpA. The oxidized apo-form of WhiB3 binds DNA (with 2 intramolecular disulfide bonds); holo-WhiB3 (with the 4Fe-4S cluster) binds DNA considerably less well. Discriminates poorly between specific and non-specific DNA-binding. Plays a role in virulence and nutritional stress. In its apo-form can act as a protein disulfide reductase. Its function is as follows. May respond to mycothiol (MSH) redox potential (E-MSH) which decreases at pH 4.5 for up to 72 hours, indicative of cellular reductive stress; deletion of whiB3 leads to a lesser E-MSH at 72 hours, indicative of cellular oxidative stress. Probably via its effects on production of polyketide lipids, regulates host gene expression, leading to blockage of phagosome maturation. Equilibration of extra- and intracytoplasmic pH kills bacteria. This Mycobacterium tuberculosis (strain ATCC 25618 / H37Rv) protein is Redox- and pH-responsive transcriptional regulator WhiB3 (whiB3).